The sequence spans 74 residues: Large ribosomal subunit protein uL30 (74 aa).

Belongs to the universal ribosomal protein uL30 family. As to quaternary structure, part of the 50S ribosomal subunit.

This chain is Large ribosomal subunit protein uL30, found in Koribacter versatilis (strain Ellin345).